The primary structure comprises 282 residues: Pantothenate synthetase (282 aa).

32–39 (MGALHEGH) lines the ATP pocket. Histidine 39 functions as the Proton donor in the catalytic mechanism. Glutamine 63 lines the (R)-pantoate pocket. Glutamine 63 is a beta-alanine binding site. 149–152 (GEKD) is an ATP binding site. Glutamine 155 lines the (R)-pantoate pocket. ATP is bound by residues valine 178 and 186–189 (LSSR).

Belongs to the pantothenate synthetase family. In terms of assembly, homodimer.

The protein localises to the cytoplasm. The enzyme catalyses (R)-pantoate + beta-alanine + ATP = (R)-pantothenate + AMP + diphosphate + H(+). It participates in cofactor biosynthesis; (R)-pantothenate biosynthesis; (R)-pantothenate from (R)-pantoate and beta-alanine: step 1/1. In terms of biological role, catalyzes the condensation of pantoate with beta-alanine in an ATP-dependent reaction via a pantoyl-adenylate intermediate. In Paracoccus denitrificans (strain Pd 1222), this protein is Pantothenate synthetase.